Here is a 123-residue protein sequence, read N- to C-terminus: uncharacterized protein (123 aa).

The segment at 76 to 97 (ENNKRKKKSEGERVRSPRTFRG) is disordered.

This is an uncharacterized protein from Saccharomyces cerevisiae (strain ATCC 204508 / S288c) (Baker's yeast).